Reading from the N-terminus, the 1070-residue chain is Duffy receptor gamma form (1070 aa).

Positions M1–A21 are cleaved as a signal peptide. Residues N22–S1003 are Extracellular-facing. Residues N134 and N179 are each glycosylated (N-linked (GlcNAc...) asparagine). 2 cysteine pairs are disulfide-bonded: C214-C243 and C227-C234. The Cell attachment site motif lies at R279–D281. Cystine bridges form between C296–C372, C410–C427, C422–C502, and C431–C500. A disordered region spans residues V518–Q912. The segment covering A526–G541 has biased composition (polar residues). Basic and acidic residues-rich tracts occupy residues K544–G559, G672–S707, and H714–E731. Residue N676 is glycosylated (N-linked (GlcNAc...) asparagine). A compositionally biased stretch (polar residues) spans T732 to G763. Residue N743 is glycosylated (N-linked (GlcNAc...) asparagine). Residues A766 to S776 show a composition bias toward low complexity. N-linked (GlcNAc...) asparagine glycosylation is present at N785. The span at G796–M807 shows a compositional bias: basic and acidic residues. A compositionally biased stretch (low complexity) spans D814–D863. The segment covering T864 to F888 has biased composition (basic and acidic residues). Residues R890–R906 are compositionally biased toward polar residues. N936 carries an N-linked (GlcNAc...) asparagine glycan. Residues T1004–W1025 traverse the membrane as a helical segment. Topologically, residues N1026 to S1070 are cytoplasmic.

The protein resides in the membrane. Its function is as follows. Binds to Neu5Gc-sialylated receptors on macaque erythrocytes. The sequence is that of Duffy receptor gamma form from Plasmodium knowlesi.